The sequence spans 64 residues: Large ribosomal subunit protein uL29 (64 aa).

It belongs to the universal ribosomal protein uL29 family.

This is Large ribosomal subunit protein uL29 from Chloroherpeton thalassium (strain ATCC 35110 / GB-78).